Consider the following 142-residue polypeptide: Large ribosomal subunit protein uL11 (142 aa).

The protein belongs to the universal ribosomal protein uL11 family. As to quaternary structure, part of the ribosomal stalk of the 50S ribosomal subunit. Interacts with L10 and the large rRNA to form the base of the stalk. L10 forms an elongated spine to which L12 dimers bind in a sequential fashion forming a multimeric L10(L12)X complex. One or more lysine residues are methylated.

In terms of biological role, forms part of the ribosomal stalk which helps the ribosome interact with GTP-bound translation factors. The protein is Large ribosomal subunit protein uL11 of Bartonella tribocorum (strain CIP 105476 / IBS 506).